A 638-amino-acid chain; its full sequence is CTTNBP2 N-terminal-like protein (638 aa).

Residues 87–284 (MKQCKNMQER…KDLEAAQQHR (198 aa)) are a coiled coil. Disordered regions lie at residues 280–303 (AQQHRSTSEQGREPVTMSRGTATE), 360–430 (RELT…PCSS), 463–490 (RHKFQSQADQDQQASGLQSPPSRDLSPT), and 514–621 (NQGP…CSPS). A Phosphoserine modification is found at Ser285. Residues 360–371 (RELTSDSSTENQ) show a composition bias toward polar residues. 2 stretches are compositionally biased toward low complexity: residues 401–430 (TMPSHLPSSGSSLSPSSTASSSLTSSPCSS) and 467–477 (QSQADQDQQAS). Ser481, Ser488, Ser522, Ser526, Ser559, Ser562, and Ser567 each carry phosphoserine. The segment covering 514-528 (NQGPIKPVSPNSSPF) has biased composition (polar residues). 2 positions are modified to phosphothreonine: Thr569 and Thr589. The span at 589 to 620 (TPSQSATTPVTKTHSQASSLAATEDLASSCSP) shows a compositional bias: polar residues. Ser591 carries the phosphoserine modification.

Interacts with CTTN/cortactin; this interaction may redistribute CTTN to stress fibers. May form homomers. Associates with the core of STRIPAK complexes composed of PP2A catalytic and scaffolding subunits, the striatins (PP2A regulatory subunits), the striatin-associated proteins MOB4, STRIP1 and STRIP2, PDCD10 and members of the STE20 kinases, such as STK24 and STK26. As to expression, predominantly expressed in skin, also detectable in spleen and lung (at protein level). Very low levels, if any, in brain (at protein level).

Its subcellular location is the cell projection. The protein resides in the lamellipodium. It is found in the cytoplasm. The protein localises to the cytoskeleton. It localises to the stress fiber. Functionally, regulates lamellipodial actin dynamics in a CTTN-dependent manner. Associates with core striatin-interacting phosphatase and kinase (STRIPAK) complex to form CTTNBP2NL-STRIPAK complexes. STRIPAK complexes have critical roles in protein (de)phosphorylation and are regulators of multiple signaling pathways including Hippo, MAPK, nuclear receptor and cytoskeleton remodeling. Different types of STRIPAK complexes are involved in a variety of biological processes such as cell growth, differentiation, apoptosis, metabolism and immune regulation. This Mus musculus (Mouse) protein is CTTNBP2 N-terminal-like protein (Cttnbp2nl).